Consider the following 397-residue polypeptide: Formate-dependent phosphoribosylglycinamide formyltransferase (397 aa).

Residues 22-23 (EL) and E82 contribute to the N(1)-(5-phospho-beta-D-ribosyl)glycinamide site. Residues R114, K155, 160–165 (SSGKGQ), 195–198 (EGFV), and E203 each bind ATP. Residues 119–312 (CLAAEELSLP…EFALHARAIL (194 aa)) enclose the ATP-grasp domain. 2 residues coordinate Mg(2+): E271 and E283. Residues D290, K360, and 367 to 368 (RR) contribute to the N(1)-(5-phospho-beta-D-ribosyl)glycinamide site.

Belongs to the PurK/PurT family. Homodimer.

The enzyme catalyses N(1)-(5-phospho-beta-D-ribosyl)glycinamide + formate + ATP = N(2)-formyl-N(1)-(5-phospho-beta-D-ribosyl)glycinamide + ADP + phosphate + H(+). It functions in the pathway purine metabolism; IMP biosynthesis via de novo pathway; N(2)-formyl-N(1)-(5-phospho-D-ribosyl)glycinamide from N(1)-(5-phospho-D-ribosyl)glycinamide (formate route): step 1/1. In terms of biological role, involved in the de novo purine biosynthesis. Catalyzes the transfer of formate to 5-phospho-ribosyl-glycinamide (GAR), producing 5-phospho-ribosyl-N-formylglycinamide (FGAR). Formate is provided by PurU via hydrolysis of 10-formyl-tetrahydrofolate. The chain is Formate-dependent phosphoribosylglycinamide formyltransferase from Alcanivorax borkumensis (strain ATCC 700651 / DSM 11573 / NCIMB 13689 / SK2).